A 225-amino-acid chain; its full sequence is Protein-L-isoaspartate O-methyltransferase (225 aa).

S75 is a catalytic residue.

This sequence belongs to the methyltransferase superfamily. L-isoaspartyl/D-aspartyl protein methyltransferase family.

Its subcellular location is the cytoplasm. It catalyses the reaction [protein]-L-isoaspartate + S-adenosyl-L-methionine = [protein]-L-isoaspartate alpha-methyl ester + S-adenosyl-L-homocysteine. Its function is as follows. Catalyzes the methyl esterification of L-isoaspartyl residues in peptides and proteins that result from spontaneous decomposition of normal L-aspartyl and L-asparaginyl residues. It plays a role in the repair and/or degradation of damaged proteins. This Xanthomonas oryzae pv. oryzae (strain PXO99A) protein is Protein-L-isoaspartate O-methyltransferase.